Here is a 153-residue protein sequence, read N- to C-terminus: D-aminoacyl-tRNA deacylase (153 aa).

A Gly-cisPro motif, important for rejection of L-amino acids motif is present at residues 137-138 (GP).

The protein belongs to the DTD family. Homodimer.

The protein localises to the cytoplasm. The enzyme catalyses glycyl-tRNA(Ala) + H2O = tRNA(Ala) + glycine + H(+). It catalyses the reaction a D-aminoacyl-tRNA + H2O = a tRNA + a D-alpha-amino acid + H(+). In terms of biological role, an aminoacyl-tRNA editing enzyme that deacylates mischarged D-aminoacyl-tRNAs. Also deacylates mischarged glycyl-tRNA(Ala), protecting cells against glycine mischarging by AlaRS. Acts via tRNA-based rather than protein-based catalysis; rejects L-amino acids rather than detecting D-amino acids in the active site. By recycling D-aminoacyl-tRNA to D-amino acids and free tRNA molecules, this enzyme counteracts the toxicity associated with the formation of D-aminoacyl-tRNA entities in vivo and helps enforce protein L-homochirality. The polypeptide is D-aminoacyl-tRNA deacylase (Dehalococcoides mccartyi (strain ATCC BAA-2100 / JCM 16839 / KCTC 5957 / BAV1)).